Here is a 767-residue protein sequence, read N- to C-terminus: Actin filament-associated protein 1-like 1 (767 aa).

The segment covering 83–97 (LRDMSDDGERSKEAS) has biased composition (basic and acidic residues). Residues 83 to 145 (LRDMSDDGER…KSPEYISSHN (63 aa)) are disordered. 5 positions are modified to phosphoserine: Ser87, Ser93, Ser97, Ser103, and Ser152. Polar residues predominate over residues 164–173 (SYPTTRMNGE). The interval 164–210 (SYPTTRMNGESKSSYNDSDAMSSSYESYDEEEEEEKGRQPKHQWPSE) is disordered. Positions 174–189 (SKSSYNDSDAMSSSYE) are enriched in low complexity. One can recognise a PH 1 domain in the interval 219-315 (DCRICAFLLR…WLKVIREVSR (97 aa)). A phosphoserine mark is found at Ser328 and Ser342. The tract at residues 341 to 381 (LSQEKQNSDSDSLGMNDSSSTLSRREACEHGKGKKNSLAEL) is disordered. A compositionally biased stretch (polar residues) spans 349–362 (DSDSLGMNDSSSTL). The PH 2 domain maps to 417 to 511 (EAPCCGYLNV…WLGLLLVEMG (95 aa)). The residue at position 556 (Tyr556) is a Phosphotyrosine. The segment at 563–605 (KVQDEEPQRPTGAQVKRHASSCSEKSHRADPQVKVKRHASSAN) is disordered. The segment covering 586-595 (EKSHRADPQV) has biased composition (basic and acidic residues). Positions 610–700 (GKNRAEEDAR…AVKERLQQSL (91 aa)) form a coiled coil. Residues 704–767 (PALGLSVSSK…KAKEWEMKKT (64 aa)) form a disordered region. A compositionally biased stretch (polar residues) spans 709–733 (SVSSKSKSQETTNKPQSSVPEQSLP). The residue at position 746 (Ser746) is a Phosphoserine. Over residues 758-767 (KAKEWEMKKT) the composition is skewed to basic and acidic residues.

As to quaternary structure, interacts with CTTN.

The protein localises to the cytoplasm. It localises to the cell projection. It is found in the podosome. Its subcellular location is the invadopodium. Its function is as follows. May be involved in podosome and invadosome formation. This Rattus norvegicus (Rat) protein is Actin filament-associated protein 1-like 1 (Afap1l1).